A 464-amino-acid chain; its full sequence is MKSTVEQLSPTRVRINVEVPFEELKPDFDKAYKALAQQIRLPGFRPGKAPAKLLEARVGRGAVLEQVVNDALPSRYSEAVTSASVKAIGQPEIEITKIEDGELLEFTAEVDVRPEITLPDYSELSVTVDPIEITDEAVEEQLLSLRQRFGTLTGVERAVEDGDFISIDLSATVDGEAVPEATASGLSHEVGSGQLIEGLDEAVVGVKAGESKEFTSTLVAGDHAGKEAVVTVTVGTVKERELPAEDDEFAQLASEFDTLDELKADLRERVARVRKVEQAGQIRDKVLETLLETVEVPLPEAVVKAEVDAALHDAVHGLDHDEEALNKLLEEQGTSREEFDKDAKESAERSVKTQLLLDAIADASDVTVGQDELTERILFQAQRYGMAPEQFIQQIQQAGQLGAVFADVRRGKALAGVVEQATVTDTSGAAVDTAELFGNGEAETEEAASTDEAASDSTESEDQK.

The PPIase FKBP-type domain maps to 162–243 (GDFISIDLSA…VGTVKERELP (82 aa)). The disordered stretch occupies residues 435–464 (ELFGNGEAETEEAASTDEAASDSTESEDQK).

Belongs to the FKBP-type PPIase family. Tig subfamily.

Its subcellular location is the cytoplasm. The catalysed reaction is [protein]-peptidylproline (omega=180) = [protein]-peptidylproline (omega=0). Functionally, involved in protein export. Acts as a chaperone by maintaining the newly synthesized protein in an open conformation. Functions as a peptidyl-prolyl cis-trans isomerase. The protein is Trigger factor of Rhodococcus jostii (strain RHA1).